The chain runs to 341 residues: UDP-3-O-acylglucosamine N-acyltransferase (341 aa).

The active-site Proton acceptor is the His241.

The protein belongs to the transferase hexapeptide repeat family. LpxD subfamily. Homotrimer.

It catalyses the reaction a UDP-3-O-[(3R)-3-hydroxyacyl]-alpha-D-glucosamine + a (3R)-hydroxyacyl-[ACP] = a UDP-2-N,3-O-bis[(3R)-3-hydroxyacyl]-alpha-D-glucosamine + holo-[ACP] + H(+). It functions in the pathway bacterial outer membrane biogenesis; LPS lipid A biosynthesis. Its function is as follows. Catalyzes the N-acylation of UDP-3-O-acylglucosamine using 3-hydroxyacyl-ACP as the acyl donor. Is involved in the biosynthesis of lipid A, a phosphorylated glycolipid that anchors the lipopolysaccharide to the outer membrane of the cell. This Mannheimia succiniciproducens (strain KCTC 0769BP / MBEL55E) protein is UDP-3-O-acylglucosamine N-acyltransferase.